We begin with the raw amino-acid sequence, 278 residues long: Shikimate dehydrogenase (NADP(+)) (278 aa).

Residues 15 to 17 (SMS) and Thr-62 contribute to the shikimate site. The Proton acceptor role is filled by Lys-66. Glu-78 lines the NADP(+) pocket. Residues Asn-87 and Asp-102 each contribute to the shikimate site. Residues 127 to 131 (GAGGA), 151 to 156 (NRTPEK), and Ile-217 each bind NADP(+). Shikimate is bound at residue Tyr-219. Gly-240 is an NADP(+) binding site.

This sequence belongs to the shikimate dehydrogenase family. In terms of assembly, homodimer.

It carries out the reaction shikimate + NADP(+) = 3-dehydroshikimate + NADPH + H(+). It participates in metabolic intermediate biosynthesis; chorismate biosynthesis; chorismate from D-erythrose 4-phosphate and phosphoenolpyruvate: step 4/7. Involved in the biosynthesis of the chorismate, which leads to the biosynthesis of aromatic amino acids. Catalyzes the reversible NADPH linked reduction of 3-dehydroshikimate (DHSA) to yield shikimate (SA). This is Shikimate dehydrogenase (NADP(+)) from Bacillus licheniformis (strain ATCC 14580 / DSM 13 / JCM 2505 / CCUG 7422 / NBRC 12200 / NCIMB 9375 / NCTC 10341 / NRRL NRS-1264 / Gibson 46).